The primary structure comprises 92 residues: Large ribosomal subunit protein eL43 (92 aa).

The C4-type zinc finger occupies 39 to 60 (CDFCGKYGMKRKAVGIWSCKGC).

Belongs to the eukaryotic ribosomal protein eL43 family.

The sequence is that of Large ribosomal subunit protein eL43 (RPL37a) from Ostreococcus lucimarinus (strain CCE9901).